The primary structure comprises 676 residues: PAS domain-containing protein cky-1 (676 aa).

Over residues 45–72 the composition is skewed to low complexity; that stretch reads SALNNNSINVPNNNTMGMSSAGSSNGSN. The interval 45 to 89 is disordered; the sequence is SALNNNSINVPNNNTMGMSSAGSSNGSNLVNGQQRSTRGASKQRR. The span at 73 to 84 shows a compositional bias: polar residues; it reads LVNGQQRSTRGA. The interval 76 to 89 is basic motif; sequence GQQRSTRGASKQRR. In terms of domain architecture, bHLH spans 76 to 129; sequence GQQRSTRGASKQRRDQINVEIQKLRDLLPLSDLIKDRLFQLQVMSLGCIFIRKH. The tract at residues 90–129 is helix-loop-helix motif; that stretch reads DQINVEIQKLRDLLPLSDLIKDRLFQLQVMSLGCIFIRKH. Positions 165-215 constitute a PAS domain; that stretch reads MLMVTRSGKILHVSDNASEYLGHSVEEIMCQGDSIYDLVDGRDHGAVQAEL. The tract at residues 436 to 462 is disordered; it reads FSCQDSPPPSEEQQPSSPQTPPFTEQP.

Heterodimer; efficient DNA binding requires dimerization with another bHLH protein. Forms a heterodimer with ARNT homolog aha-1; binds DNA as heterodimer.

The protein localises to the nucleus. In terms of biological role, transcription factor. Efficient DNA binding requires dimerization with another bHLH protein, such as ARNT homolog aha-1. Regulates transcription of target genes, probably acting in complex with aha-1. In Caenorhabditis elegans, this protein is PAS domain-containing protein cky-1.